We begin with the raw amino-acid sequence, 216 residues long: ATP-dependent Clp protease proteolytic subunit (216 aa).

The active-site Nucleophile is the serine 101. Histidine 126 is a catalytic residue.

The protein belongs to the peptidase S14 family. In terms of assembly, component of the chloroplastic Clp protease core complex.

Its subcellular location is the plastid. It is found in the chloroplast stroma. It carries out the reaction Hydrolysis of proteins to small peptides in the presence of ATP and magnesium. alpha-casein is the usual test substrate. In the absence of ATP, only oligopeptides shorter than five residues are hydrolyzed (such as succinyl-Leu-Tyr-|-NHMec, and Leu-Tyr-Leu-|-Tyr-Trp, in which cleavage of the -Tyr-|-Leu- and -Tyr-|-Trp bonds also occurs).. Its function is as follows. Cleaves peptides in various proteins in a process that requires ATP hydrolysis. Has a chymotrypsin-like activity. Plays a major role in the degradation of misfolded proteins. This Oryza nivara (Indian wild rice) protein is ATP-dependent Clp protease proteolytic subunit.